The following is a 173-amino-acid chain: Globin-like host-protective antigen (173 aa).

Residues 1-15 (MRFLLLAAFVAYAYA) form the signal peptide. Residues 25–166 (ALSALDVVPL…FNDEAQKQLA (142 aa)) form the Globin domain. H114 provides a ligand contact to heme b.

Belongs to the globin family.

The protein resides in the secreted. It is found in the extracellular space. Its function is as follows. May be a globin and may play a role in oxygen transport. The protein is Globin-like host-protective antigen of Trichostrongylus colubriformis (Black scour worm).